The primary structure comprises 85 residues: Toxin BmKT (85 aa).

The N-terminal stretch at 1–19 (MNYLVFFSLALLLMTGVES) is a signal peptide. The LCN-type CS-alpha/beta domain occupies 21-83 (RDGYIADDKN…VPIRVPGKCN (63 aa)). Cystine bridges form between C31–C82, C35–C55, C41–C65, and C45–C67.

It belongs to the long (4 C-C) scorpion toxin superfamily. Sodium channel inhibitor family. Alpha subfamily. As to expression, expressed by the venom gland.

Its subcellular location is the secreted. Binds to sodium channels (Nav) and inhibits the inactivation of the activated channels, thereby blocking neuronal transmission. Tested on mice, has antitumor effect and strong inhibitory effect on pain. In Olivierus martensii (Manchurian scorpion), this protein is Toxin BmKT.